The chain runs to 328 residues: Chlorate reductase subunit beta (328 aa).

4Fe-4S ferredoxin-type domains follow at residues 6-35, 125-156, and 158-187; these read VAYV…RDGR, NHSF…KRPE, and GIVV…FNLQ. Residues C15, C18, C21, C25, C134, C137, and C142 each coordinate [4Fe-4S] cluster. C146, C167, and C173 together coordinate [3Fe-4S] cluster. 5 residues coordinate [4Fe-4S] cluster: C177, C194, C197, C209, and C213.

Heterotrimer of alpha, beta and gamma subunits. The cofactor is [3Fe-4S] cluster. It depends on [4Fe-4S] cluster as a cofactor.

The protein localises to the periplasm. Its function is as follows. Electron transfer subunit of the terminal reductase during anaerobic growth on chlorate. The sequence is that of Chlorate reductase subunit beta (clrB) from Ideonella dechloratans.